A 404-amino-acid chain; its full sequence is MESRVLSRTTAIAALPKLFRPSREAASFGFATGVKTPVGLVKDGGSLTWGRQLRPVLLLEPVQTGPVCSRREKTAVQPCRAASGSSGEAKTGFLEKYPALVTGSFFFMWYFLNVIFNILNKKIYNYFPYPYFVSVIHLFVGVVYCLASWSVGLPKRAPMDSKLLKLLIPVAVCHAIGHVTSNVSFAAVAVSFTHTIKALEPFFNAAASQFVLGQSIPITLWLSLAPVVIGVSMASLTELSFNWLGFISAMISNVSFTYRSLYSKKAMTDMDSTNIYAYISIIALFVCLPPAIIVEGPQLMKHGFNDAIAKVGLTKFISDLFWVGMFYHLYNQLATNTLERVAPLTHAVGNVLKRVFVIGFSIIAFGNKISTQTAIGTSIAIAGVALYSLIKAKMEEEKRQMKST.

Residues 1–74 (MESRVLSRTT…GPVCSRREKT (74 aa)) constitute a chloroplast transit peptide. The Chloroplast intermembrane segment spans residues 75-98 (AVQPCRAASGSSGEAKTGFLEKYP). The helical transmembrane segment at 99 to 119 (ALVTGSFFFMWYFLNVIFNIL) threads the bilayer. Over 120–131 (NKKIYNYFPYPY) the chain is Lumenal. The helical transmembrane segment at 132 to 152 (FVSVIHLFVGVVYCLASWSVG) threads the bilayer. Over 153–209 (LPKRAPMDSKLLKLLIPVAVCHAIGHVTSNVSFAAVAVSFTHTIKALEPFFNAAASQ) the chain is Chloroplast intermembrane. The helical transmembrane segment at 210–230 (FVLGQSIPITLWLSLAPVVIG) threads the bilayer. The Lumenal portion of the chain corresponds to 231-274 (VSMASLTELSFNWLGFISAMISNVSFTYRSLYSKKAMTDMDSTN). The helical transmembrane segment at 275–294 (IYAYISIIALFVCLPPAIIV) threads the bilayer. The Chloroplast intermembrane portion of the chain corresponds to 295-372 (EGPQLMKHGF…IAFGNKISTQ (78 aa)). Residues 373–393 (TAIGTSIAIAGVALYSLIKAK) form a helical membrane-spanning segment. The Lumenal segment spans residues 394 to 404 (MEEEKRQMKST).

The protein belongs to the TPT transporter family. TPT (TC 2.A.7.9) subfamily. Post-translationally, the N-terminus is blocked.

It localises to the plastid. The protein resides in the chloroplast membrane. Functionally, mediates the export of fixed carbons from the chloroplasts into the cytosol in the form of triose phosphates. This chain is Triose phosphate/phosphate translocator, chloroplastic, found in Spinacia oleracea (Spinach).